Here is a 445-residue protein sequence, read N- to C-terminus: tRNA-2-methylthio-N(6)-dimethylallyladenosine synthase (445 aa).

Positions Lys2 to His119 constitute an MTTase N-terminal domain. Residues Cys11, Cys48, Cys82, Cys156, Cys160, and Cys163 each contribute to the [4Fe-4S] cluster site. A Radical SAM core domain is found at Arg142–Ser378. The TRAM domain maps to Gln379 to Thr442.

It belongs to the methylthiotransferase family. MiaB subfamily. In terms of assembly, monomer. [4Fe-4S] cluster is required as a cofactor.

The protein resides in the cytoplasm. The enzyme catalyses N(6)-dimethylallyladenosine(37) in tRNA + (sulfur carrier)-SH + AH2 + 2 S-adenosyl-L-methionine = 2-methylsulfanyl-N(6)-dimethylallyladenosine(37) in tRNA + (sulfur carrier)-H + 5'-deoxyadenosine + L-methionine + A + S-adenosyl-L-homocysteine + 2 H(+). Functionally, catalyzes the methylthiolation of N6-(dimethylallyl)adenosine (i(6)A), leading to the formation of 2-methylthio-N6-(dimethylallyl)adenosine (ms(2)i(6)A) at position 37 in tRNAs that read codons beginning with uridine. The protein is tRNA-2-methylthio-N(6)-dimethylallyladenosine synthase of Aromatoleum aromaticum (strain DSM 19018 / LMG 30748 / EbN1) (Azoarcus sp. (strain EbN1)).